We begin with the raw amino-acid sequence, 96 residues long: Bublin coiled-coil protein (96 aa).

The stretch at 39 to 79 (NSCLDDIEDRNDALNGKLHELLESNRQARKDFRQQLNDEEA) forms a coiled coil. The segment at 63–96 (NRQARKDFRQQLNDEEASPPPAEDPASRDTQTED) is disordered. Residues 87-96 (PASRDTQTED) show a composition bias toward basic and acidic residues.

It belongs to the UPF0184 (EST00098) family.

It localises to the cell junction. Its subcellular location is the cytoplasm. It is found in the cytoskeleton. Functionally, essential for intermediate filament organization in intestinal cells, interacts with intermediate filament and regulates intestinal lumen morphology. The protein is Bublin coiled-coil protein (bbln) of Ctenopharyngodon idella (Grass carp).